Here is a 193-residue protein sequence, read N- to C-terminus: Ion-translocating oxidoreductase complex subunit A (193 aa).

6 helical membrane passes run 5-25 (VLLL…FLGL), 39-59 (IGMS…SYLV), 63-83 (ILIP…VIAV), 102-122 (LLGI…VALL), 134-154 (AVYG…FAAL), and 171-191 (SIAL…TGLV).

Belongs to the NqrDE/RnfAE family. As to quaternary structure, the complex is composed of six subunits: RnfA, RnfB, RnfC, RnfD, RnfE and RnfG.

The protein localises to the cell inner membrane. Functionally, part of a membrane-bound complex that couples electron transfer with translocation of ions across the membrane. The chain is Ion-translocating oxidoreductase complex subunit A from Pseudoalteromonas translucida (strain TAC 125).